The sequence spans 385 residues: MKKAVHFGAGNIGRGFIGEILSKNGFDIHFVDTNKSIIAELNNRHSYEIGIASSEHEKISVKAVSGINNSENPEAVIEAIAKADILTTAIGPNVLPYIAELIAKGLQKRKEEKVQSPLDIIACENMIGGSEFLEEKVSDYLSESDKLYLSKFIGFPNAAVDRIVPAQKHKDVLYVEVEPFSEWVIDASHLKNKEIKLEGVHYTTDLEPFIERKLFSVNSGHAAVAYSSAYKGYKTILEGLQDEEILNILKAVQKETRALLLAKWAQYFKQDELIKYHELIISRFSNPEIIDEVSRVARTPIRKLGYDERFIRPIRELNDRKLSYQNHLDIVGKIFAYHDENDAQAIQLQEKLKITELPMLIEEVTGLSNQKLILEIEKVINHYKK.

NAD(+) is bound at residue 4 to 15 (AVHFGAGNIGRG).

Belongs to the mannitol dehydrogenase family.

It carries out the reaction D-mannitol 1-phosphate + NAD(+) = beta-D-fructose 6-phosphate + NADH + H(+). This chain is Mannitol-1-phosphate 5-dehydrogenase, found in Lactococcus lactis subsp. lactis (strain IL1403) (Streptococcus lactis).